An 85-amino-acid chain; its full sequence is Keratin-associated protein 7-1 (85 aa).

Positions Gly37–Tyr82 are 12 X 2 AA repeats of G-[YCGS].

Belongs to the KRTAP type 7 family. In terms of assembly, interacts with wool keratins. Wool.

In the wool cortex, wool keratin intermediate filaments are embedded in an interfilamentous matrix, consisting of hair keratin-associated proteins (KRTAP), which are essential for the formation of a rigid and resistant wool shaft through their extensive disulfide bond cross-linking with abundant cysteine residues of wool keratins. The matrix proteins include the high-sulfur and high-glycine-tyrosine keratins. In Ovis aries (Sheep), this protein is Keratin-associated protein 7-1 (KRTAP7-1).